Consider the following 277-residue polypeptide: 3-methyl-2-oxobutanoate hydroxymethyltransferase (277 aa).

2 residues coordinate Mg(2+): D43 and D82. 3-methyl-2-oxobutanoate is bound by residues 43–44 (DS), D82, and K112. Residue E114 participates in Mg(2+) binding. Residue E181 is the Proton acceptor of the active site.

The protein belongs to the PanB family. As to quaternary structure, homodecamer; pentamer of dimers. Requires Mg(2+) as cofactor.

The protein localises to the cytoplasm. The catalysed reaction is 3-methyl-2-oxobutanoate + (6R)-5,10-methylene-5,6,7,8-tetrahydrofolate + H2O = 2-dehydropantoate + (6S)-5,6,7,8-tetrahydrofolate. The protein operates within cofactor biosynthesis; (R)-pantothenate biosynthesis; (R)-pantoate from 3-methyl-2-oxobutanoate: step 1/2. Its function is as follows. Catalyzes the reversible reaction in which hydroxymethyl group from 5,10-methylenetetrahydrofolate is transferred onto alpha-ketoisovalerate to form ketopantoate. The sequence is that of 3-methyl-2-oxobutanoate hydroxymethyltransferase from Exiguobacterium sp. (strain ATCC BAA-1283 / AT1b).